A 409-amino-acid chain; its full sequence is Glycosaminoglycan xylosylkinase (409 aa).

Topologically, residues 1-6 (MKLKQR) are cytoplasmic. Residues 7–25 (VVVLCAVLFLLGLAKVFLL) traverse the membrane as a helical; Signal-anchor for type II membrane protein segment. Topologically, residues 26-409 (DGGEGSAASR…IEDRMNLPHP (384 aa)) are lumenal. The ATP site is built by Q107 and K123. D142 is a Mn(2+) binding site. N-linked (GlcNAc...) asparagine glycosylation occurs at N193. 2 disulfide bridges follow: C196–C211 and C201–C204. 222 to 225 (TLWL) contributes to the ATP binding site. 2 cysteine pairs are disulfide-bonded: C257-C331 and C332-C389. Residue D289 is part of the active site. Residues E294 and D309 each contribute to the ATP site. D309 provides a ligand contact to Mn(2+).

It belongs to the FAM20 family. Requires Mn(2+) as cofactor.

The protein resides in the golgi apparatus membrane. It carries out the reaction 3-O-(beta-D-galactosyl-(1-&gt;3)-beta-D-galactosyl-(1-&gt;4)-beta-D-xylosyl)-L-seryl-[protein] + ATP = 3-O-(beta-D-galactosyl-(1-&gt;3)-beta-D-galactosyl-(1-&gt;4)-beta-D-2-O-phosphoxylosyl)-L-seryl-[protein] + ADP + H(+). Responsible for the 2-O-phosphorylation of xylose in the glycosaminoglycan-protein linkage region of proteoglycans thereby regulating the amount of mature GAG chains. Sulfated glycosaminoglycans (GAGs), including heparan sulfate and chondroitin sulfate, are synthesized on the so-called common GAG-protein linkage region (GlcUAbeta1-3Galbeta1-3Galbeta1-4Xylbeta1-O-Ser) of core proteins, which is formed by the stepwise addition of monosaccharide residues by the respective specific glycosyltransferases. The protein is Glycosaminoglycan xylosylkinase of Danio rerio (Zebrafish).